A 273-amino-acid polypeptide reads, in one-letter code: MSTIRPVFYVSDGTGITAETIGHSLLTQFSGFTFVAERMVFIDDAEKARDASQRILAASERYRVRPIVVNSCVNPYLSVILAESGALMLDVFAPFIGLLEHELNTSRHSCVGRAHGMVDFETYHRRINAMNFALAHDDGVAASYDEAEVILVAVSRAGKTPTCIYLALHYGIRAANYPLIDEDLNSDQLPLRLRPYRKKLFGLTINPERLQQIRQERRPNSRYAALDTCKREVAAAEQMFSAERITTLSTTHTSIEEISSKVLVTLGLQREMF.

153–160 (AVSRAGKT) provides a ligand contact to ADP.

It belongs to the pyruvate, phosphate/water dikinase regulatory protein family. PSRP subfamily.

It catalyses the reaction [pyruvate, water dikinase] + ADP = [pyruvate, water dikinase]-phosphate + AMP + H(+). It carries out the reaction [pyruvate, water dikinase]-phosphate + phosphate + H(+) = [pyruvate, water dikinase] + diphosphate. In terms of biological role, bifunctional serine/threonine kinase and phosphorylase involved in the regulation of the phosphoenolpyruvate synthase (PEPS) by catalyzing its phosphorylation/dephosphorylation. This chain is Putative phosphoenolpyruvate synthase regulatory protein, found in Xylella fastidiosa (strain M23).